Here is a 152-residue protein sequence, read N- to C-terminus: Large ribosomal subunit protein uL15 (152 aa).

A disordered region spans residues 1–57 (MTSTLNTLKSNSGSRKKKLRKGRGIAAGQGASCGFGMRGQKSRSGRPTRPGFEGGQM). The segment covering 14-23 (SRKKKLRKGR) has biased composition (basic residues). The span at 25 to 37 (IAAGQGASCGFGM) shows a compositional bias: gly residues.

It belongs to the universal ribosomal protein uL15 family. As to quaternary structure, part of the 50S ribosomal subunit.

Binds to the 23S rRNA. The protein is Large ribosomal subunit protein uL15 of Prochlorococcus marinus (strain MIT 9312).